Reading from the N-terminus, the 396-residue chain is MGFWSLLEVASMPVIQVLFMSLVGAFMASDRCKLFPVEARNSMNKVVFVLFAPALMFANLAQTVTLEDIISWWFMPVNMGLTFLIGGLLGWLVVKILKPPPYLEGLIVATCSAGNMGNLPIILVPAICDEDKSPFGNRSVCRTVGLSYASFSMALGGFYIWTYTFRLIKGSAMKVQAIEESEKIAIKSSNSDLEADHKTHLLGAPEDKENKVVKEKTGFWRKGVDFLHEILEELLAPPTLGAIIGFIFGAVRWLRNLIIGDDAPLRIVQSTAKLLGDGTIPCMTIILGGNLIQGLRSSAVKPMVVLGIVCVRYIAMPIIGIGIVLTAANLGFLPADPLFQYVLMLQFTLPPAMNIGTMTQLYNVAQDECSVLMLWTYLVAILALTVWSTIFLHLLV.

At 1-5 (MGFWS) the chain is on the lumenal side. The helical transmembrane segment at 6–26 (LLEVASMPVIQVLFMSLVGAF) threads the bilayer. At 27 to 45 (MASDRCKLFPVEARNSMNK) the chain is on the cytoplasmic side. A helical transmembrane segment spans residues 46 to 66 (VVFVLFAPALMFANLAQTVTL). The Lumenal segment spans residues 67–73 (EDIISWW). A helical membrane pass occupies residues 74 to 94 (FMPVNMGLTFLIGGLLGWLVV). The Cytoplasmic segment spans residues 95–106 (KILKPPPYLEGL). A helical membrane pass occupies residues 107 to 127 (IVATCSAGNMGNLPIILVPAI). At 128–144 (CDEDKSPFGNRSVCRTV) the chain is on the lumenal side. A helical transmembrane segment spans residues 145–165 (GLSYASFSMALGGFYIWTYTF). Over 166–229 (RLIKGSAMKV…WRKGVDFLHE (64 aa)) the chain is Cytoplasmic. Residues 230–250 (ILEELLAPPTLGAIIGFIFGA) traverse the membrane as a helical segment. Residues 251-273 (VRWLRNLIIGDDAPLRIVQSTAK) are Lumenal-facing. Residues 274-294 (LLGDGTIPCMTIILGGNLIQG) traverse the membrane as a helical segment. At 295–312 (LRSSAVKPMVVLGIVCVR) the chain is on the cytoplasmic side. A helical membrane pass occupies residues 313–333 (YIAMPIIGIGIVLTAANLGFL). The Lumenal segment spans residues 334-337 (PADP). Residues 338 to 358 (LFQYVLMLQFTLPPAMNIGTM) traverse the membrane as a helical segment. Residues 359-370 (TQLYNVAQDECS) are Cytoplasmic-facing. The helical transmembrane segment at 371 to 391 (VLMLWTYLVAILALTVWSTIF) threads the bilayer. At 392 to 396 (LHLLV) the chain is on the lumenal side.

Belongs to the auxin efflux carrier (TC 2.A.69.2) family. Expressed in seedlings, cauline leaves and flowers.

The protein resides in the endoplasmic reticulum membrane. Functionally, involved in cellular auxin homeostasis by regulating auxin metabolism. Regulates intracellular auxin accumulation at the endoplasmic reticulum and thus auxin availability for nuclear auxin signaling. This is Protein PIN-LIKES 5 from Arabidopsis thaliana (Mouse-ear cress).